A 322-amino-acid chain; its full sequence is Interferon regulatory factor 1 (322 aa).

Residues 5-113 (RMRMRPWLEM…SAVRVYRMLP (109 aa)) constitute a DNA-binding region (IRF tryptophan pentad repeat). At lysine 78 the chain carries N6-acetyllysine. The interval 92–164 (EEVKDQSRNK…STLPDDHSNY (73 aa)) is disordered. Polar residues predominate over residues 146-157 (DTFSDGLSSSTL). Glycyl lysine isopeptide (Lys-Gly) (interchain with G-Cter in SUMO) cross-links involve residues lysine 276 and lysine 296.

Belongs to the IRF family. In terms of assembly, monomer. Homodimer. Interacts with EP300. Interacts with MYD88. Interacts with PIAS3. Interacts with SPOP. In terms of processing, phosphorylated by CK2 and this positively regulates its activity. Sumoylation represses the transcriptional activity and displays enhanced resistance to protein degradation. Sumoylated by UBE2I/UBC9 and SUMO1. Inactivates the tumor suppressor activity. Elevated levels in tumor cells. Major site is Lys-276. Sumoylation is enhanced by PIAS3. Desumoylated by SENP1 in tumor cells and appears to compete with ubiquitination on C-terminal sites. Post-translationally, ubiquitinated in a SPOP-depedent manner. Appears to compete with sumoylation on C-terminal sites.

It is found in the nucleus. It localises to the cytoplasm. Its activity is regulated as follows. Activated by MYD88. Transcriptional regulator which displays a remarkable functional diversity in the regulation of cellular responses. Regulates transcription of IFN and IFN-inducible genes, host response to viral and bacterial infections, regulation of many genes expressed during hematopoiesis, inflammation, immune responses and cell proliferation and differentiation, regulation of the cell cycle and induction of growth arrest and programmed cell death following DNA damage. Stimulates both innate and acquired immune responses through the activation of specific target genes and can act as a transcriptional activator and repressor regulating target genes by binding to an interferon-stimulated response element (ISRE) in their promoters. Has an essentail role in IFNG-dependent immunity to mycobacteria. Binds to a consensus sequence in gene promoters. Its target genes for transcriptional activation activity include: genes involved in anti-viral response, such as IFN-alpha/beta, RIGI, TNFSF10/TRAIL, ZBP1, OAS1/2, PIAS1/GBP, EIF2AK2/PKR and RSAD2/viperin; antibacterial response, such as GBP2, GBP5 and NOS2/INOS; anti-proliferative response, such as p53/TP53, LOX and CDKN1A; apoptosis, such as BBC3/PUMA, CASP1, CASP7 and CASP8; immune response, such as IL7, IL12A/B and IL15, PTGS2/COX2 and CYBB; DNA damage responses and DNA repair, such as POLQ/POLH; MHC class I expression, such as TAP1, PSMB9/LMP2, PSME1/PA28A, PSME2/PA28B and B2M and MHC class II expression, such as CIITA; metabolic enzymes, such as ACOD1/IRG1. Represses genes involved in anti-proliferative response, such as BIRC5/survivin, CCNB1, CCNE1, CDK1, CDK2 and CDK4 and in immune response, such as FOXP3, IL4, ANXA2 and TLR4. Stimulates p53/TP53-dependent transcription through enhanced recruitment of EP300 leading to increased acetylation of p53/TP53. Plays an important role in immune response directly affecting NK maturation and activity, macrophage production of IL12, Th1 development and maturation of CD8+ T-cells. Also implicated in the differentiation and maturation of dendritic cells and in the suppression of regulatory T (Treg) cells development. Acts as a tumor suppressor and plays a role not only in antagonism of tumor cell growth but also in stimulating an immune response against tumor cells. This Bos taurus (Bovine) protein is Interferon regulatory factor 1 (IRF1).